The following is a 471-amino-acid chain: Tetratricopeptide repeat protein 29 (471 aa).

TPR repeat units lie at residues 92–131 (DKLREAAQARSLFWLQRPLEDQPDKLDNFYHYLTKAEAAE), 136–173 (YEEVYNNLYALACYFDNSEDKWVRNHFYERCFKIAQLI), 182–215 (AEAEAHMGLLYEEEGELLKAAEHYEAFHELTQGR), 234–267 (VRTYRLLSDRMLQNRDYKQAIKILIKASEIAREG), 274–307 (GEASYYLGLAHLASGEYETALSVLDRYSEISTSL), 314–347 (GRAYEAMAKVLQSQGEMTEAIKYLEKFVVIARNN), and 354–387 (IQACTMLGDIYNEKGQYNKASDYFQQAFSTAMEV).

It is found in the cytoplasm. The protein localises to the cytoskeleton. The protein resides in the flagellum axoneme. In terms of biological role, axonemal protein which is implicated in axonemal and/or peri-axonemal structure assembly and regulates flagellum assembly and beating and therefore sperm motility. This chain is Tetratricopeptide repeat protein 29 (Ttc29), found in Rattus norvegicus (Rat).